Reading from the N-terminus, the 1331-residue chain is Mitogen-activated protein kinase kinase kinase 15 (1331 aa).

Positions 1–13 (MEGGGGSGGGGGP) are enriched in gly residues. Positions 1 to 61 (MEGGGGSGGG…GEAEGGRGPR (61 aa)) are disordered. Residues 656–912 (NGERVVLGKG…AADLLQEGFL (257 aa)) form the Protein kinase domain. ATP-binding positions include 662–670 (LGKGSYGIV) and K685. Catalysis depends on D777, which acts as the Proton acceptor. 2 disordered regions span residues 934–964 (GTGT…SDAQ) and 983–1005 (LSVP…EERD). Low complexity predominate over residues 940–962 (LPSSGELVGSSSSEHGSISPDSD). Positions 992 to 1005 (LDDRSTALPPEERD) are enriched in basic and acidic residues. A coiled-coil region spans residues 1216 to 1236 (LVQKEREYQNLLRLILDQKTQ).

Belongs to the protein kinase superfamily. STE Ser/Thr protein kinase family. MAP kinase kinase kinase subfamily. It depends on Mg(2+) as a cofactor.

It carries out the reaction L-seryl-[protein] + ATP = O-phospho-L-seryl-[protein] + ADP + H(+). The catalysed reaction is L-threonyl-[protein] + ATP = O-phospho-L-threonyl-[protein] + ADP + H(+). Its activity is regulated as follows. Contains an N-terminal autoinhibitory domain. Activated by phosphorylation at Thr-816, inhibited by phosphorylation at Ser-928. Serine/threonine kinase which acts as a component of the MAP kinase signal transduction pathway. Once activated, acts as an upstream activator of the p38 MAPK signal transduction cascade through the phosphorylation and activation of several MAP kinase kinases. May function in a signal transduction pathway that is activated by various cell stresses and leads to apoptosis. Involved in phosphorylation of WNK4 in response to osmotic stress or hypotonic low-chloride stimulation via the p38 MAPK signal transduction cascade. In Mus musculus (Mouse), this protein is Mitogen-activated protein kinase kinase kinase 15.